The chain runs to 266 residues: L-aspartate dehydrogenase (266 aa).

NAD(+) contacts are provided by A123 and N189. The active site involves H219.

It belongs to the L-aspartate dehydrogenase family.

It carries out the reaction L-aspartate + NADP(+) + H2O = oxaloacetate + NH4(+) + NADPH + H(+). The catalysed reaction is L-aspartate + NAD(+) + H2O = oxaloacetate + NH4(+) + NADH + H(+). The protein operates within cofactor biosynthesis; NAD(+) biosynthesis; iminoaspartate from L-aspartate (dehydrogenase route): step 1/1. In terms of biological role, specifically catalyzes the NAD or NADP-dependent dehydrogenation of L-aspartate to iminoaspartate. This is L-aspartate dehydrogenase from Cupriavidus necator (strain ATCC 17699 / DSM 428 / KCTC 22496 / NCIMB 10442 / H16 / Stanier 337) (Ralstonia eutropha).